The sequence spans 117 residues: Modulator protein MzrA (117 aa).

Over 1-9 (MNSPGLRKP) the chain is Cytoplasmic. Residues 10 to 29 (TIWRPLLLLFPLLALLLSMS) traverse the membrane as a helical segment. The Periplasmic segment spans residues 30–117 (SPRLPDEVML…THGTIRVARS (88 aa)).

The protein belongs to the MzrA family. As to quaternary structure, interacts with EnvZ.

It is found in the cell inner membrane. Its function is as follows. Modulates the activity of the EnvZ/OmpR two-component regulatory system, probably by directly modulating EnvZ enzymatic activity and increasing stability of phosphorylated OmpR. The chain is Modulator protein MzrA from Dickeya zeae (strain Ech586) (Dickeya dadantii (strain Ech586)).